A 115-amino-acid chain; its full sequence is uncharacterized protein (115 aa).

This is an uncharacterized protein from Ostreid herpesvirus 1 (isolate France) (OsHV-1).